A 228-amino-acid polypeptide reads, in one-letter code: Response regulator MprA (228 aa).

In terms of domain architecture, Response regulatory spans 2-116; the sequence is RILVVDDDRA…ELLARMRALL (115 aa). Asp-46 is modified (4-aspartylphosphate). The ompR/PhoB-type DNA-binding region spans 127 to 225; the sequence is SVAMTFSDLT…VRGVGYVLRE (99 aa).

In terms of processing, phosphorylated and dephosphorylated by MprB.

The protein resides in the cytoplasm. Functionally, member of the two-component regulatory system MprB/MprA which contributes to maintaining a balance among several systems involved in stress resistance and is required for establishment and maintenance of persistent infection in the host. Functions as a transcriptional regulator that recognizes a 19-bp nucleotide motif comprizing two loosely conserved 8-bp direct DNA-binding motif repeats separated by a 3-bp spacer region. The sequence is that of Response regulator MprA (mprA) from Mycobacterium avium (strain 104).